Reading from the N-terminus, the 272-residue chain is Shikimate dehydrogenase (NADP(+)) (272 aa).

Shikimate contacts are provided by residues 14-16 and T61; that span reads SKS. K65 acts as the Proton acceptor in catalysis. E77 is a binding site for NADP(+). The shikimate site is built by N86 and D102. NADP(+)-binding positions include 126–130, 149–154, and M213; these read GAGGA and NRTVSR. A shikimate-binding site is contributed by Y215. G237 serves as a coordination point for NADP(+).

The protein belongs to the shikimate dehydrogenase family. As to quaternary structure, homodimer.

The enzyme catalyses shikimate + NADP(+) = 3-dehydroshikimate + NADPH + H(+). It participates in metabolic intermediate biosynthesis; chorismate biosynthesis; chorismate from D-erythrose 4-phosphate and phosphoenolpyruvate: step 4/7. Involved in the biosynthesis of the chorismate, which leads to the biosynthesis of aromatic amino acids. Catalyzes the reversible NADPH linked reduction of 3-dehydroshikimate (DHSA) to yield shikimate (SA). The chain is Shikimate dehydrogenase (NADP(+)) from Escherichia coli (strain SMS-3-5 / SECEC).